A 187-amino-acid polypeptide reads, in one-letter code: Orotate phosphoribosyltransferase (187 aa).

110-118 (EDVVTTGGS) is a binding site for 5-phospho-alpha-D-ribose 1-diphosphate. Orotate is bound by residues T114 and R142.

It belongs to the purine/pyrimidine phosphoribosyltransferase family. PyrE subfamily. Homodimer. It depends on Mg(2+) as a cofactor.

It catalyses the reaction orotidine 5'-phosphate + diphosphate = orotate + 5-phospho-alpha-D-ribose 1-diphosphate. Its pathway is pyrimidine metabolism; UMP biosynthesis via de novo pathway; UMP from orotate: step 1/2. In terms of biological role, catalyzes the transfer of a ribosyl phosphate group from 5-phosphoribose 1-diphosphate to orotate, leading to the formation of orotidine monophosphate (OMP). This Thermotoga maritima (strain ATCC 43589 / DSM 3109 / JCM 10099 / NBRC 100826 / MSB8) protein is Orotate phosphoribosyltransferase.